We begin with the raw amino-acid sequence, 193 residues long: Rho-related GTP-binding protein RhoA-B (193 aa).

Residues 12–19 (GDGACGKT), 30–37 (FPEVYVPT), 59–63 (DTAGQ), 117–120 (NKKD), and 160–162 (SAK) each bind GTP. Residue Tyr-34 is glycosylated ((Microbial infection) O-linked (GlcNAc) tyrosine; by Yersinia Afp18). Cys-190 bears the Cysteine methyl ester mark. The S-geranylgeranyl cysteine moiety is linked to residue Cys-190. A propeptide spans 191–193 (CLL) (removed in mature form).

It belongs to the small GTPase superfamily. Rho family. In terms of processing, (Microbial infection) Glycosylated at Tyr-34 by Yersinia ruckeri toxin Afp18. Mono-O-GlcNAcylation by Afp18 inhibits RhoA activation by guanine nucleotide exchange factors and blocks RhoA signaling.

The protein resides in the cell membrane. In terms of biological role, regulates a signal transduction pathway linking plasma membrane receptors to the assembly of focal adhesions and actin stress fibers. The protein is Rho-related GTP-binding protein RhoA-B of Danio rerio (Zebrafish).